Reading from the N-terminus, the 192-residue chain is MGTIKSGEIEKGSFLLFKGMPHIVLEREFSKMGRGGAIVRLKLKNLKNKSVVKETLKGADTVEEIEVLEVSSQYLYRDSENLIFMDLETYDQFNVNLREVPNIEDKVLFFQEAEVYSLVKWDNEVIDLKLPPKVAFEVVAAEAAVKGDTVTNAMKNVTLHTGLVVKAPLFINVGDKILVNSETKEYAERVKE.

This sequence belongs to the elongation factor P family.

The protein localises to the cytoplasm. The protein operates within protein biosynthesis; polypeptide chain elongation. Functionally, involved in peptide bond synthesis. Stimulates efficient translation and peptide-bond synthesis on native or reconstituted 70S ribosomes in vitro. Probably functions indirectly by altering the affinity of the ribosome for aminoacyl-tRNA, thus increasing their reactivity as acceptors for peptidyl transferase. The polypeptide is Elongation factor P (Borrelia hermsii (strain HS1 / DAH)).